The sequence spans 322 residues: Malate dehydrogenase (322 aa).

NAD(+)-binding positions include 10–15 and D34; that span reads GSGMIG. Residues R83 and R89 each contribute to the substrate site. Residues N96 and 119–121 each bind NAD(+); that span reads ITN. N121 and R152 together coordinate substrate. H176 serves as the catalytic Proton acceptor.

This sequence belongs to the LDH/MDH superfamily. MDH type 3 family.

The catalysed reaction is (S)-malate + NAD(+) = oxaloacetate + NADH + H(+). Catalyzes the reversible oxidation of malate to oxaloacetate. This chain is Malate dehydrogenase, found in Mesorhizobium japonicum (strain LMG 29417 / CECT 9101 / MAFF 303099) (Mesorhizobium loti (strain MAFF 303099)).